Here is a 411-residue protein sequence, read N- to C-terminus: Peptidase T (411 aa).

Residue His-79 participates in Zn(2+) binding. Asp-81 is an active-site residue. Asp-142 contributes to the Zn(2+) binding site. Glu-176 (proton acceptor) is an active-site residue. Zn(2+) contacts are provided by Glu-177, Asp-199, and His-381.

It belongs to the peptidase M20B family. Zn(2+) is required as a cofactor.

The protein resides in the cytoplasm. It catalyses the reaction Release of the N-terminal residue from a tripeptide.. In terms of biological role, cleaves the N-terminal amino acid of tripeptides. The chain is Peptidase T from Geobacillus thermodenitrificans (strain NG80-2).